A 249-amino-acid polypeptide reads, in one-letter code: tRNA pseudouridine synthase A (249 aa).

The active-site Nucleophile is the D53. Substrate is bound at residue Y111.

The protein belongs to the tRNA pseudouridine synthase TruA family. As to quaternary structure, homodimer.

It catalyses the reaction uridine(38/39/40) in tRNA = pseudouridine(38/39/40) in tRNA. Functionally, formation of pseudouridine at positions 38, 39 and 40 in the anticodon stem and loop of transfer RNAs. In Streptococcus gordonii (strain Challis / ATCC 35105 / BCRC 15272 / CH1 / DL1 / V288), this protein is tRNA pseudouridine synthase A.